The chain runs to 188 residues: UPF0314 protein Sala_3154 (188 aa).

3 consecutive transmembrane segments (helical) span residues Thr-8–Gly-28, Trp-57–Met-77, and Met-143–Ile-163.

It belongs to the UPF0314 family.

It is found in the cell membrane. The chain is UPF0314 protein Sala_3154 from Sphingopyxis alaskensis (strain DSM 13593 / LMG 18877 / RB2256) (Sphingomonas alaskensis).